We begin with the raw amino-acid sequence, 374 residues long: MATDFPAEISALRGTLEQITAVTDPDALRARIAELSEAAAAPDLWDDPDAAQKVTSRLSHTQSELERLDTLRSRIDDLETLVQLAAEEDDADTLAEAEAELTKIRTSMGELEVRTLLAGEYDSREAVVTIRSGAGGVDAADFAEMLLRMYLRWAERKGYPTQVLDTSYAEEAGLKSATFEVKVPYAFGTLSVEAGTHRLVRISPFDNQGRRQTSFAAVEVIPLIEQTDHIDIPETDIRIDVFRSSGPGGQSVNTTDSAVRITHLPTGIVVSMQNEKSQIQNRAAAMRVLQSRLLLAMQEEENAKKKELAGDVKASWGDQMRSYVLQPYQMVKDLRTEHEVGNPSAVFDGDIDDFIEAGIRWRRQQQTVRESATA.

Q250 is modified (N5-methylglutamine).

Belongs to the prokaryotic/mitochondrial release factor family. Post-translationally, methylated by PrmC. Methylation increases the termination efficiency of RF2.

The protein localises to the cytoplasm. Functionally, peptide chain release factor 2 directs the termination of translation in response to the peptide chain termination codons UGA and UAA. This chain is Peptide chain release factor 2, found in Beutenbergia cavernae (strain ATCC BAA-8 / DSM 12333 / CCUG 43141 / JCM 11478 / NBRC 16432 / NCIMB 13614 / HKI 0122).